The primary structure comprises 312 residues: Ribosomal RNA small subunit methyltransferase H (312 aa).

Residues 33–35 (GGY), aspartate 51, phenylalanine 78, aspartate 97, and glutamine 104 each bind S-adenosyl-L-methionine.

It belongs to the methyltransferase superfamily. RsmH family.

It is found in the cytoplasm. It catalyses the reaction cytidine(1402) in 16S rRNA + S-adenosyl-L-methionine = N(4)-methylcytidine(1402) in 16S rRNA + S-adenosyl-L-homocysteine + H(+). Specifically methylates the N4 position of cytidine in position 1402 (C1402) of 16S rRNA. This chain is Ribosomal RNA small subunit methyltransferase H, found in Orientia tsutsugamushi (strain Boryong) (Rickettsia tsutsugamushi).